We begin with the raw amino-acid sequence, 159 residues long: Superoxide dismutase [Cu-Zn] (159 aa).

3 residues coordinate Cu cation: His47, His49, and His64. Cys58 and Cys150 form a disulfide bridge. 4 residues coordinate Zn(2+): His64, His72, His81, and Asp84. Cu cation is bound at residue His121.

Belongs to the Cu-Zn superoxide dismutase family. Cu cation serves as cofactor. Requires Zn(2+) as cofactor.

The protein resides in the cytoplasm. It catalyses the reaction 2 superoxide + 2 H(+) = H2O2 + O2. Its function is as follows. Destroys radicals which are normally produced within the cells and which are toxic to biological systems. This chain is Superoxide dismutase [Cu-Zn] (SOD), found in Haemonchus contortus (Barber pole worm).